The sequence spans 510 residues: NAD(P)H-quinone oxidoreductase subunit 2 A, chloroplastic (510 aa).

14 helical membrane passes run 31–51 (LIFP…IDLT), 57–77 (IPWL…ALLF), 99–119 (IFQF…VEYI), 124–144 (MAIT…MFLC), 149–169 (LITI…LSGY), 184–204 (LLMG…LYGL), 229–249 (ISIA…LAPF), 261–281 (PTPV…ALAT), 295–315 (WHLL…LIAI), 323–343 (MLAY…IVGD), 354–374 (YMLF…LFGL), 395–415 (ALSL…AGFF), 418–438 (LYLF…IGLL), and 484–504 (MIVC…IIAI).

The protein belongs to the complex I subunit 2 family. As to quaternary structure, NDH is composed of at least 16 different subunits, 5 of which are encoded in the nucleus.

The protein resides in the plastid. It localises to the chloroplast thylakoid membrane. It catalyses the reaction a plastoquinone + NADH + (n+1) H(+)(in) = a plastoquinol + NAD(+) + n H(+)(out). The enzyme catalyses a plastoquinone + NADPH + (n+1) H(+)(in) = a plastoquinol + NADP(+) + n H(+)(out). Its function is as follows. NDH shuttles electrons from NAD(P)H:plastoquinone, via FMN and iron-sulfur (Fe-S) centers, to quinones in the photosynthetic chain and possibly in a chloroplast respiratory chain. The immediate electron acceptor for the enzyme in this species is believed to be plastoquinone. Couples the redox reaction to proton translocation, and thus conserves the redox energy in a proton gradient. This is NAD(P)H-quinone oxidoreductase subunit 2 A, chloroplastic from Nicotiana tabacum (Common tobacco).